Reading from the N-terminus, the 171-residue chain is Adenine phosphoribosyltransferase (171 aa).

This sequence belongs to the purine/pyrimidine phosphoribosyltransferase family. In terms of assembly, homodimer.

It localises to the cytoplasm. It catalyses the reaction AMP + diphosphate = 5-phospho-alpha-D-ribose 1-diphosphate + adenine. It participates in purine metabolism; AMP biosynthesis via salvage pathway; AMP from adenine: step 1/1. Catalyzes a salvage reaction resulting in the formation of AMP, that is energically less costly than de novo synthesis. The protein is Adenine phosphoribosyltransferase of Solidesulfovibrio magneticus (strain ATCC 700980 / DSM 13731 / RS-1) (Desulfovibrio magneticus).